Here is a 100-residue protein sequence, read N- to C-terminus: MAERLTTEARKQALGGIPDWTEVSGRDAIGKTFVFKDFNEAFGFMTRAALVAEKMDHHPEWRNVYKTVEVVLSTHDAGGVTALDIELARAMNAIAKLTPG.

It belongs to the pterin-4-alpha-carbinolamine dehydratase family.

It carries out the reaction (4aS,6R)-4a-hydroxy-L-erythro-5,6,7,8-tetrahydrobiopterin = (6R)-L-erythro-6,7-dihydrobiopterin + H2O. This is Putative pterin-4-alpha-carbinolamine dehydratase from Bradyrhizobium diazoefficiens (strain JCM 10833 / BCRC 13528 / IAM 13628 / NBRC 14792 / USDA 110).